We begin with the raw amino-acid sequence, 308 residues long: MQIKFLTTLATVLTSVAAMGDLAFNLGVKNDDGTCKDVSTFEGDLDFLKSHSKIIKTYAVSDCNTLQNLGPAAEAEGFQIQLGIWPNDDAHFEAEKEALQNYLPKISVSTIKIFLVGSEALYREDLTASELASKINDIKGLVKGIKGKNGKSYSSVPVGTVDSWDVLVDGASKPAIDAADVVYSNSFSYWQKNSQANASYSLFDDVMQALQTLQTAKGSTDIEFWVGETGWPTDGSSYGDSVPSVENAADQWQKGICALRAWGINVAVYEAFDEAWKPDTSGTSSVEKHWGVWQSDKTLKYSIDCKFN.

Residues 1–18 (MQIKFLTTLATVLTSVAA) form the signal peptide. Residue E119 is the Proton donor of the active site. A glycan (N-linked (GlcNAc...) asparagine) is linked at N197. E228 acts as the Nucleophile in catalysis.

It belongs to the glycosyl hydrolase 17 family.

It is found in the secreted. It localises to the cell wall. The catalysed reaction is Successive hydrolysis of beta-D-glucose units from the non-reducing ends of (1-&gt;3)-beta-D-glucans, releasing alpha-glucose.. In Candida albicans (Yeast), this protein is Glucan 1,3-beta-glucosidase (BGL2).